We begin with the raw amino-acid sequence, 188 residues long: Cell division protein SepF (188 aa).

The disordered stretch occupies residues 29–53 (EQQDQDQRATQADGGALATLGDSNP).

It belongs to the SepF family. As to quaternary structure, homodimer. Interacts with FtsZ.

It is found in the cytoplasm. Functionally, cell division protein that is part of the divisome complex and is recruited early to the Z-ring. Probably stimulates Z-ring formation, perhaps through the cross-linking of FtsZ protofilaments. Its function overlaps with FtsA. The polypeptide is Cell division protein SepF (Synechococcus sp. (strain CC9902)).